Reading from the N-terminus, the 693-residue chain is Elongation factor G (693 aa).

Positions 8–282 constitute a tr-type G domain; the sequence is EKTRNIGIMA…AVIDYLPSPL (275 aa). GTP contacts are provided by residues 17 to 24, 81 to 85, and 135 to 138; these read AHIDAGKT, DTPGH, and NKMD.

This sequence belongs to the TRAFAC class translation factor GTPase superfamily. Classic translation factor GTPase family. EF-G/EF-2 subfamily.

It is found in the cytoplasm. Functionally, catalyzes the GTP-dependent ribosomal translocation step during translation elongation. During this step, the ribosome changes from the pre-translocational (PRE) to the post-translocational (POST) state as the newly formed A-site-bound peptidyl-tRNA and P-site-bound deacylated tRNA move to the P and E sites, respectively. Catalyzes the coordinated movement of the two tRNA molecules, the mRNA and conformational changes in the ribosome. This chain is Elongation factor G, found in Staphylococcus aureus (strain Newman).